A 333-amino-acid chain; its full sequence is Adenosine deaminase (333 aa).

Zn(2+)-binding residues include His-12 and His-14. Substrate-binding residues include His-14, Asp-16, and Gly-170. Position 197 (His-197) interacts with Zn(2+). The active-site Proton donor is Glu-200. Residue Asp-278 coordinates Zn(2+). Asp-279 contributes to the substrate binding site.

Belongs to the metallo-dependent hydrolases superfamily. Adenosine and AMP deaminases family. Adenosine deaminase subfamily. It depends on Zn(2+) as a cofactor.

It catalyses the reaction adenosine + H2O + H(+) = inosine + NH4(+). The enzyme catalyses 2'-deoxyadenosine + H2O + H(+) = 2'-deoxyinosine + NH4(+). Catalyzes the hydrolytic deamination of adenosine and 2-deoxyadenosine. The sequence is that of Adenosine deaminase from Shigella sonnei (strain Ss046).